Reading from the N-terminus, the 512-residue chain is Histidine ammonia-lyase (512 aa).

Residues 143-145 constitute a cross-link (5-imidazolinone (Cys-Gly)); the sequence is CSG. Residue S144 is modified to 2,3-didehydroalanine (Ser).

The protein belongs to the PAL/histidase family. In terms of processing, contains an active site 4-methylidene-imidazol-5-one (MIO), which is formed autocatalytically by cyclization and dehydration of residues Cys-Ser-Gly.

It is found in the cytoplasm. It catalyses the reaction L-histidine = trans-urocanate + NH4(+). Its pathway is amino-acid degradation; L-histidine degradation into L-glutamate; N-formimidoyl-L-glutamate from L-histidine: step 1/3. This is Histidine ammonia-lyase from Streptomyces avermitilis (strain ATCC 31267 / DSM 46492 / JCM 5070 / NBRC 14893 / NCIMB 12804 / NRRL 8165 / MA-4680).